The following is a 130-amino-acid chain: RutC family protein in leuC 5'region (130 aa).

Belongs to the RutC family.

The protein is RutC family protein in leuC 5'region of Leuconostoc mesenteroides subsp. cremoris.